Here is a 343-residue protein sequence, read N- to C-terminus: Glyceraldehyde-3-phosphate dehydrogenase (343 aa).

NAD(+) is bound by residues 11–12 (TI) and Gly110. D-glyceraldehyde 3-phosphate is bound at residue 139 to 141 (SCN). Cys140 functions as the Nucleophile in the catalytic mechanism. Residue Arg168 participates in NAD(+) binding. Residue 194-195 (HG) participates in D-glyceraldehyde 3-phosphate binding. Gln301 provides a ligand contact to NAD(+).

This sequence belongs to the glyceraldehyde-3-phosphate dehydrogenase family. Homotetramer.

The protein resides in the cytoplasm. The enzyme catalyses D-glyceraldehyde 3-phosphate + phosphate + NADP(+) = (2R)-3-phospho-glyceroyl phosphate + NADPH + H(+). It catalyses the reaction D-glyceraldehyde 3-phosphate + phosphate + NAD(+) = (2R)-3-phospho-glyceroyl phosphate + NADH + H(+). Its pathway is carbohydrate degradation; glycolysis; pyruvate from D-glyceraldehyde 3-phosphate: step 1/5. The polypeptide is Glyceraldehyde-3-phosphate dehydrogenase (Methanoregula boonei (strain DSM 21154 / JCM 14090 / 6A8)).